A 1122-amino-acid chain; its full sequence is Histone deacetylase 5 (1122 aa).

The disordered stretch occupies residues 1 to 24; the sequence is MNSPNESDGMSGREPSLEILPRTS. Lys-35 participates in a covalent cross-link: Glycyl lysine isopeptide (Lys-Gly) (interchain with G-Cter in SUMO2). Disordered stretches follow at residues 41 to 60 and 196 to 281; these read AMPS…VELR and KEPT…SSPL. The span at 247-258 shows a compositional bias: basic and acidic residues; the sequence is DSRDDFPLRKTA. Position 259 is a phosphoserine; by AMPK, CaMK1, SIK1 and PKD/PRKD1 (Ser-259). The span at 272–281 shows a compositional bias: basic and acidic residues; sequence KVAERRSSPL. The residue at position 292 (Thr-292) is a Phosphothreonine; by PKC. 2 disordered regions span residues 302–343 and 481–504; these read GAGP…NIPT and MRTV…LPQS. A compositionally biased stretch (low complexity) spans 312 to 327; sequence NSAPGSGPSSPNSSHS. Positions 328–340 are enriched in polar residues; it reads TIAENGFTGSVPN. The span at 494–504 shows a compositional bias: low complexity; that stretch reads SRTQSSPLPQS. Phosphoserine; by AMPK, CaMK1, SIK1 and PKD/PRKD1 is present on Ser-498. An N6-acetyllysine modification is found at Lys-533. The disordered stretch occupies residues 536-625; that stretch reads TKTGELPRQP…GPDLEEPGAG (90 aa). Over residues 581–621 the composition is skewed to acidic residues; it reads STQEDLEEEDEEDDGEEEEDCIQVKDEEGESGAEEGPDLEE. Ser-611 and Ser-661 each carry phosphoserine. Positions 684–1028 are histone deacetylase; the sequence is GVVYDTFMLK…VSALLSVELQ (345 aa). Zn(2+)-binding residues include Cys-696, Cys-698, His-704, and Cys-781. The active site involves His-833. The Nuclear export signal motif lies at 1081 to 1122; sequence EEAETVSAMALLSVGAEQAQAAAAREHSPRPAEEPMEQEPAL. The disordered stretch occupies residues 1097–1122; the sequence is EQAQAAAAREHSPRPAEEPMEQEPAL. Positions 1104 to 1113 are enriched in basic and acidic residues; sequence AREHSPRPAE. Ser-1108 carries the post-translational modification Phosphoserine.

The protein belongs to the histone deacetylase family. HD type 2 subfamily. Interacts with AHRR, BAHD1, BCOR, HDAC7, HDAC9, CTBP1, MEF2C, NCOR2, NRIP1, PHB2 and a 14-3-3 chaperone protein. Interacts with BCL6, DDIT3/CHOP, GRK5, KDM5B and MYOCD. Interacts with EP300 in the presence of TFAP2C. Interacts with ANKRA2. Interacts with CUL7 (as part of the 3M complex); negatively regulated by ANKRA2. Interacts with ZBTB7B; the interaction allows the recruitment of HDAC4 on CD8 loci for deacetylation and possible inhibition of CD8 genes expression. Interacts with RARA. In terms of processing, phosphorylated by AMPK, CaMK1, SIK1 and PRKD1 at Ser-259 and Ser-498. The phosphorylation is required for the export to the cytoplasm and inhibition. Phosphorylated by the PKC kinases PKN1 and PKN2, impairing nuclear import. Phosphorylated by GRK5, leading to nuclear export of HDAC5 and allowing MEF2-mediated transcription. Ubiquitinated. Polyubiquitination however does not lead to its degradation. In terms of tissue distribution, ubiquitous.

It localises to the nucleus. Its subcellular location is the cytoplasm. The enzyme catalyses N(6)-acetyl-L-lysyl-[histone] + H2O = L-lysyl-[histone] + acetate. In terms of biological role, responsible for the deacetylation of lysine residues on the N-terminal part of the core histones (H2A, H2B, H3 and H4). Histone deacetylation gives a tag for epigenetic repression and plays an important role in transcriptional regulation, cell cycle progression and developmental events. Histone deacetylases act via the formation of large multiprotein complexes. Involved in muscle maturation by repressing transcription of myocyte enhancer MEF2C. During muscle differentiation, it shuttles into the cytoplasm, allowing the expression of myocyte enhancer factors. Involved in the MTA1-mediated epigenetic regulation of ESR1 expression in breast cancer. Serves as a corepressor of RARA and causes its deacetylation. In association with RARA, plays a role in the repression of microRNA-10a and thereby in the inflammatory response. The polypeptide is Histone deacetylase 5 (HDAC5) (Homo sapiens (Human)).